A 423-amino-acid polypeptide reads, in one-letter code: Large ribosomal subunit protein mL37 (423 aa).

A mitochondrion-targeting transit peptide spans 1-29; that stretch reads MALASGPALRALAGSGRLGLGGYGTPKRG.

It belongs to the mitochondrion-specific ribosomal protein mL37 family. In terms of assembly, component of the mitochondrial ribosome large subunit (39S) which comprises a 16S rRNA and about 50 distinct proteins.

It localises to the mitochondrion. In Mus musculus (Mouse), this protein is Large ribosomal subunit protein mL37 (Mrpl37).